The chain runs to 125 residues: Glycine cleavage system H protein (125 aa).

The region spanning 19 to 101 is the Lipoyl-binding domain; the sequence is VAVVGISDYA…EGKGWFMKLK (83 aa). Lys60 is modified (N6-lipoyllysine).

The protein belongs to the GcvH family. In terms of assembly, the glycine cleavage system is composed of four proteins: P, T, L and H. The cofactor is (R)-lipoate.

In terms of biological role, the glycine cleavage system catalyzes the degradation of glycine. The H protein shuttles the methylamine group of glycine from the P protein to the T protein. The sequence is that of Glycine cleavage system H protein from Xanthobacter autotrophicus (strain ATCC BAA-1158 / Py2).